A 155-amino-acid polypeptide reads, in one-letter code: RNA-binding protein 3 (155 aa).

Positions 6 to 84 constitute an RRM domain; it reads GKLFVGGLNF…RQIRVDHAGK (79 aa). At Arg-47 the chain carries Omega-N-methylarginine. Positions 79–155 are disordered; sequence VDHAGKSARG…GGNYRDNYDN (77 aa). Position 105 is an asymmetric dimethylarginine; alternate (Arg-105). Arg-105 carries the dimethylated arginine; alternate modification. Arg-105 carries the omega-N-methylarginine; alternate modification. The span at 105–114 shows a compositional bias: gly residues; the sequence is RGGGDQGYGS. Omega-N-methylarginine is present on residues Arg-120 and Arg-130. Ser-135 and Ser-145 each carry phosphoserine. Tyr-153 is subject to Phosphotyrosine.

Interacts with RPL4. Associates with the 60S ribosomal subunits. Arg-105 is dimethylated, probably to asymmetric dimethylarginine. In terms of processing, phosphorylated. Isoform 2 is methylated. As to expression, widely expressed in the brain. Highly expressed in the cerebellum and olfactory bulb (at protein level). Expressed in neurons and glial cells.

It localises to the nucleus. The protein resides in the cytoplasm. Its subcellular location is the cell projection. It is found in the dendrite. Cold-inducible mRNA binding protein that enhances global protein synthesis at both physiological and mild hypothermic temperatures. Reduces the relative abundance of microRNAs, when overexpressed. Enhances phosphorylation of translation initiation factors and active polysome formation. This Rattus norvegicus (Rat) protein is RNA-binding protein 3 (Rbm3).